Here is a 221-residue protein sequence, read N- to C-terminus: MSDSEEESQDRQLKIVVLGDGTSGKTSLATCFAQETFGKQYKQTIGLDFFLRRITLPGNLNVTLQVWDIGGQTIGGKMLDKYIYGAQGILLVYDITNYQSFENLEDWYSVVKTVSEESETQPLVALVGNKIDLEHMRTVKPDKHLRFCQENGFSSHFVSAKTGDSVFLCFQKVAAEILGIKLNKAEIEQSQRVVKADIVNYNQEPMSRTVNPPRSSMCAVQ.

Ser-2 is modified (N-acetylserine). A Phosphoserine modification is found at Ser-8. Residues Gly-21, Gly-24, Lys-25, Thr-26, Ser-27, Gly-38, Lys-39, Tyr-41, and Thr-44 each coordinate GTP. Thr-26 provides a ligand contact to Mg(2+). Residues 35 to 49 (ETFGKQYKQTIGLDF) form a switch I region. Mg(2+)-binding residues include Thr-44 and Asp-68. The switch II stretch occupies residues 68 to 85 (DIGGQTIGGKMLDKYIYG). Residues Gly-71, Asn-129, Lys-130, Asp-132, Ala-160, and Lys-161 each contribute to the GTP site. Cys-218 bears the Cysteine methyl ester mark. The S-farnesyl cysteine moiety is linked to residue Cys-218. The propeptide at 219 to 221 (AVQ) is removed in mature form.

It belongs to the small GTPase superfamily. Rab family. Interacts (prenylated form) with PDE6D; the interaction promotes RAB28 delivery to the photoreceptor outer segments. Interacts with KCNJ13; the interaction may facilitate cone outer segments phagocytosis. Interacts with RELA; the interaction contributes to RELA transport from cytoplasm to nucleus. Mg(2+) is required as a cofactor. In terms of processing, isoprenylated. Testis, brain, and to much lower levels heart, skeletal muscle and fat cells. Expressed in the retina.

Its subcellular location is the cell membrane. The protein resides in the cytoplasm. The protein localises to the cytoskeleton. It localises to the cilium basal body. It is found in the nucleus. It carries out the reaction GTP + H2O = GDP + phosphate + H(+). Regulated by guanine nucleotide exchange factors (GEFs) which promote the exchange of bound GDP for free GTP. Regulated by GTPase activating proteins (GAPs) which increase the GTP hydrolysis activity. Inhibited by GDP dissociation inhibitors (GDIs). In terms of biological role, the small GTPases Rab are key regulators of intracellular membrane trafficking, from the formation of transport vesicles to their fusion with membranes. Rabs cycle between an inactive GDP-bound form and an active GTP-bound form that is able to recruit to membranes different sets of downstream effectors directly responsible for vesicle formation, movement, tethering and fusion. RAB28 is required for shedding and phagocytosis of cone cell outer segments (OS) discs in the retina. Also participates in nuclear factor kappa-B p65/RELA nuclear transport in endothelial cells. The sequence is that of Ras-related protein Rab-28 from Rattus norvegicus (Rat).